Consider the following 1722-residue polypeptide: MSDPRPSQAEKHKLGRAAAKLKDPSRTMQADDYFARKFKAINGSMGPATLNTSSSSEGGGGGGGPANGTPAVPKMGVRARVSEWPPKKDCSKDLACKTLWESRSQSSYESVTSIIQNGQNDQGDRQPEEQLDLDFVEAKYTIGDIFVHSPQRGLHPIRQRSNSDITISDIDTEDVLDQHAVNPNTGAALHREYGSTSSIDRQGLSGENVFAMLRGYRIESYDPKVTGSFGFPDFFPCDTAISPSLHAAAQISRGEFVRISGLDYMDGGLLMGRDRDKPFKRRLKSESVETSLFRKLRAVKSEHETFKFTSDLEEGRLDRGIRPWSCQRCFAHYDVQSILFNINEAMATRASVGKRKNITTGASAASQTPVPVGPAGGCESPLGSKEDLNSKENPDADEGDGKSNDLVLSCPYFRNETGGEGDRRIALSRANSASFSSGESCSFESSLSSHCTNAGVSVLEVPRESQPIHREKVKRYIIEHVDLGAYYYRKFFYGKEHQNYFGIDENLGPVAVSIRREKVEDPREKEGSQFNYRVAFRTSELTTLRGAILEDAVPSTARHGTARGLPLKEVLEYVIPELSIQCLRQAANSPKVPEQLLKLDEQGLSFQHKIGILYCRAGQSTEEEMYNNETAGPAFEEFLDLLGQRVRLKGFSKYRAQLDNKTDSTGTHSLYTTYKDFELMFHVSTLLPYMPNNRQQLLRKRHIGNDIVTIVFQEPGALPFTPKNIRSHFQHVFVIVKVHNPCTENVCYSVGVSRSKDVPPFGPPIPKGVTFPKSAVFRDFLLAKVINAENAAHKSEKFRAMATRTRQEYLKDLAENFVTTATVDTSAKFSFITLGAKKKERVKPRKDAHLFSIGAIMWHVVARDFGQSADIECLLGISNEFIMLIEKDSKNVVFNCSCRDVIGWTSGLVSIKAFYERGECLLLSSVDNRSEDIREIVQRLLIVTRGCETVEMTLRRNGLGQLGFHVNFEGIVADVEPFGFAWKAGLRQGSRLVEICKVAVATLTHEQMIDLLRTSVTVKVVIIQPHEDGSPRRGCSELCRIPMVEYKLDSEGTPCEYKTPFRRNTTWHRVPTPALQPVSRASPVPGTPDRLQCQPLLQQAQAAIPRSTSFDRKLPDGTRSSPSNQSSSSDPGPGGSGPWRPQVGYDGCPSPLLLEHQGPGSVECDGTGEQEDLLEGGRLPETKWHGPPSKVLSSYKERVLQKDGSCKESPNKLSHIGDKSCSSHSSSNTLSSNTSSNSDDKHFGSGDLMDPELLGLTYIKGASTDSGIDTTPCMPATILGPVHLTGSRSLMHSRAEQWADAADVSVADDDPAKMYALHGYASAISSSAADGSMGDLSEVSSHSSGSQHSGSPSAHCSKSTGSLDSSKVYIVTHGGGQQAPGAVTKPYHRQGAANKYVIGWKKSEGSPPPEEPEVTECPRIYGEMDIMSTATQHPAVVGDSVSETQHVLSKDDFLKLMLPDSPLVEEGRRKFSFYGNVSPRRSLYRTLSDESVCSNRRGSSFASSRSSILEQALPNDILFSTTPPYHSTLPPRTHPAPSMGSLRNEFWFSDGSLSDKSKCADPGLMPLPDTAAGLDWSHLVDAARAFEGLDSDEELGLLCHHASYLDQRVASFCTLTDLQHGQELEGAPELSLCVDPTSGKEFMDTPGERSPSTLTGKVNQLELILRQLQTDLRKEKQDKAVLQAEVQHLRQDNMRLQEESQTATAQLRKFTEWFFSTIDKKA.

Disordered regions lie at residues 1–29 (MSDP…RTMQ) and 44–72 (SMGP…TPAV). Over residues 57-66 (EGGGGGGGPA) the composition is skewed to gly residues. Phosphoserine is present on residues Ser-149, Ser-380, and Ser-384. Residues 362-405 (ASAASQTPVPVGPAGGCESPLGSKEDLNSKENPDADEGDGKSND) are disordered. The segment covering 384 to 403 (SKEDLNSKENPDADEGDGKS) has biased composition (basic and acidic residues). Residues 596 to 813 (LLKLDEQGLS…RTRQEYLKDL (218 aa)) form the Rap-GAP domain. A PDZ domain is found at 951–1027 (EMTLRRNGLG…VKVVIIQPHE (77 aa)). Position 1030 is a phosphoserine (Ser-1030). 2 disordered regions span residues 1068–1246 (HRVP…FGSG) and 1331–1360 (GSMG…SKST). 2 stretches are compositionally biased toward low complexity: residues 1091–1103 (LQCQ…AQAA) and 1120–1131 (SSPSNQSSSSDP). A compositionally biased stretch (basic and acidic residues) spans 1195-1218 (YKERVLQKDGSCKESPNKLSHIGD). A compositionally biased stretch (low complexity) spans 1220–1237 (SCSSHSSSNTLSSNTSSN). A Phosphoserine modification is found at Ser-1245. Low complexity predominate over residues 1331-1355 (GSMGDLSEVSSHSSGSQHSGSPSAH). Residues Ser-1461, Ser-1472, Ser-1478, Ser-1488, Ser-1549, Ser-1552, and Ser-1591 each carry the phosphoserine modification. A coiled-coil region spans residues 1652 to 1712 (STLTGKVNQL…ATAQLRKFTE (61 aa)).

The polypeptide is Signal-induced proliferation-associated 1-like protein 2 (Sipa1l2) (Mus musculus (Mouse)).